The following is a 481-amino-acid chain: Ribosomal RNA small subunit methyltransferase F (481 aa).

S-adenosyl-L-methionine-binding positions include 125–131, Glu149, Asp176, and Asp194; that span reads AAAPGSK. Cys247 acts as the Nucleophile in catalysis.

This sequence belongs to the class I-like SAM-binding methyltransferase superfamily. RsmB/NOP family.

Its subcellular location is the cytoplasm. The catalysed reaction is cytidine(1407) in 16S rRNA + S-adenosyl-L-methionine = 5-methylcytidine(1407) in 16S rRNA + S-adenosyl-L-homocysteine + H(+). Its function is as follows. Specifically methylates the cytosine at position 1407 (m5C1407) of 16S rRNA. This Psychromonas ingrahamii (strain DSM 17664 / CCUG 51855 / 37) protein is Ribosomal RNA small subunit methyltransferase F.